The following is a 355-amino-acid chain: Probable F-box protein At5g36000 (355 aa).

Residues 1 to 14 are compositionally biased toward basic and acidic residues; that stretch reads MNTRSGDAEGDIRG. The tract at residues 1–44 is disordered; that stretch reads MNTRSGDAEGDIRGKMIAPVRDGNGGQKRKLVQSNDIQRDEDGG. The F-box; degenerate domain occupies 78-124; it reads QSRFSWYEQDIWTYITRFLDGKSLVKLGATNKWFYKIAMEDTVWRFA.

This is Probable F-box protein At5g36000 from Arabidopsis thaliana (Mouse-ear cress).